The chain runs to 568 residues: Oxygen-dependent choline dehydrogenase (568 aa).

8 to 37 lines the FAD pocket; the sequence is DYIIIGAGSAGNTLAARLTEDAGVTVLLLE. Catalysis depends on H477, which acts as the Proton acceptor.

It belongs to the GMC oxidoreductase family. FAD is required as a cofactor.

It carries out the reaction choline + A = betaine aldehyde + AH2. The catalysed reaction is betaine aldehyde + NAD(+) + H2O = glycine betaine + NADH + 2 H(+). It participates in amine and polyamine biosynthesis; betaine biosynthesis via choline pathway; betaine aldehyde from choline (cytochrome c reductase route): step 1/1. Involved in the biosynthesis of the osmoprotectant glycine betaine. Catalyzes the oxidation of choline to betaine aldehyde and betaine aldehyde to glycine betaine at the same rate. In Pseudomonas syringae pv. syringae (strain B728a), this protein is Oxygen-dependent choline dehydrogenase.